Consider the following 267-residue polypeptide: Potassium channel regulatory protein (267 aa).

One can recognise a BTB domain in the interval E5 to T74.

Can form homooligomers. Interacts with KCNA1 (via cytoplasmic N-terminal domain) and KCNA4.

Its subcellular location is the endoplasmic reticulum. In terms of biological role, inhibits potassium fluxes in cells. May regulate Kv1 family channel proteins by retaining a fraction of channels in endomembranes. The protein is Potassium channel regulatory protein (KCNRG) of Bos taurus (Bovine).